The chain runs to 288 residues: 4-diphosphocytidyl-2-C-methyl-D-erythritol kinase (288 aa).

Lys-12 is an active-site residue. Pro-95–Ser-105 contributes to the ATP binding site. Residue Asp-137 is part of the active site.

It belongs to the GHMP kinase family. IspE subfamily.

It carries out the reaction 4-CDP-2-C-methyl-D-erythritol + ATP = 4-CDP-2-C-methyl-D-erythritol 2-phosphate + ADP + H(+). Its pathway is isoprenoid biosynthesis; isopentenyl diphosphate biosynthesis via DXP pathway; isopentenyl diphosphate from 1-deoxy-D-xylulose 5-phosphate: step 3/6. In terms of biological role, catalyzes the phosphorylation of the position 2 hydroxy group of 4-diphosphocytidyl-2C-methyl-D-erythritol. The sequence is that of 4-diphosphocytidyl-2-C-methyl-D-erythritol kinase from Halorhodospira halophila (strain DSM 244 / SL1) (Ectothiorhodospira halophila (strain DSM 244 / SL1)).